The chain runs to 62 residues: Synergistic-type venom protein C8S2, chain 2 (62 aa).

Disulfide bonds link C3/C24, C17/C42, and C46/C57.

The protein belongs to the three-finger toxin family. Short-chain subfamily. Aminergic toxin sub-subfamily. Heterodimer of C8S2 chain 1 (AC P01410) and chain 2; disulfide-linked. In terms of tissue distribution, expressed by the venom gland.

It is found in the secreted. In terms of biological role, this protein shows a synergetic toxic effect in that it enhances the toxicity of other toxins. The protein is Synergistic-type venom protein C8S2, chain 2 of Dendroaspis angusticeps (Eastern green mamba).